Here is a 226-residue protein sequence, read N- to C-terminus: PKHD-type hydroxylase Daci_1172 (226 aa).

The 101-residue stretch at 78–178 (KVLPPRFNRY…RYASFFWTHS (101 aa)) folds into the Fe2OG dioxygenase domain. Fe cation contacts are provided by H96, D98, and H159. R169 serves as a coordination point for 2-oxoglutarate.

Requires Fe(2+) as cofactor. L-ascorbate is required as a cofactor.

The chain is PKHD-type hydroxylase Daci_1172 from Delftia acidovorans (strain DSM 14801 / SPH-1).